The primary structure comprises 369 residues: RAB6-interacting golgin (369 aa).

The interval 1 to 128 is disordered; that stretch reads MAQGWAGFSE…HNNVEILPPK (128 aa). Basic and acidic residues predominate over residues 11-27; sequence EELRRLKQTKDPFEPQR. 2 stretches are compositionally biased toward polar residues: residues 46-61 and 82-93; these read EQSQKLGLQDGSTSLL and SPTLPSHFTLTS. Positions 106–120 are enriched in basic and acidic residues; that stretch reads QPKELGLENSHDGHN. A coiled-coil region spans residues 145–297; sequence RWEVLQQEQR…EVERLLHEQE (153 aa). The interval 188–369 is necessary for interaction with RCHY1; sequence IQKELQALDD…GNDISAALAT (182 aa). The tract at residues 334–369 is disordered; that stretch reads VSPKVDDQCGNSSSIPFLSPNCPNQEGNDISAALAT. The segment covering 342–361 has biased composition (polar residues); it reads CGNSSSIPFLSPNCPNQEGN.

The protein belongs to the GORAB family. In terms of assembly, interacts with SCYL1. Interacts with RCHY1 and RAB6A/RAB6.

It is found in the cytoplasm. It localises to the golgi apparatus. The polypeptide is RAB6-interacting golgin (GORAB) (Homo sapiens (Human)).